The following is a 751-amino-acid chain: Catalase-peroxidase (751 aa).

Positions 92 to 240 form a cross-link, tryptophyl-tyrosyl-methioninium (Trp-Tyr) (with M-266); the sequence is WHSAGTYRVT…VAAAHMGLIY (149 aa). Catalysis depends on histidine 93, which acts as the Proton acceptor. A cross-link (tryptophyl-tyrosyl-methioninium (Tyr-Met) (with W-92)) is located at residues 240–266; that stretch reads YVNPEGPDGVPDPIAAARDIRTTFHRM. Position 281 (histidine 281) interacts with heme b.

The protein belongs to the peroxidase family. Peroxidase/catalase subfamily. Homodimer or homotetramer. Heme b is required as a cofactor. Formation of the three residue Trp-Tyr-Met cross-link is important for the catalase, but not the peroxidase activity of the enzyme.

The protein resides in the cytoplasm. It carries out the reaction H2O2 + AH2 = A + 2 H2O. The enzyme catalyses 2 H2O2 = O2 + 2 H2O. In terms of biological role, bifunctional enzyme with both catalase and broad-spectrum peroxidase activity. The protein is Catalase-peroxidase of Phaeosphaeria nodorum (strain SN15 / ATCC MYA-4574 / FGSC 10173) (Glume blotch fungus).